The primary structure comprises 448 residues: MYMELYLMFSNFFKSIRWCKVPAFMQAKVEMGLVNEVELKSLLEQETDSPQTNAASLMEQGSLRERRAKAPRNSVVQSFKIVILSNKLNLLLPFGPLAILVHYLTDNKGWFFLLSLVGITPLAERLGYATEQLSCYTGATVGGLLNATFGNVIELIISIIALKNGMIRVVQLTLLGSILSNILLVLGCAFFCGGLVFPGKDQVFDKRNAVVSSGMLLMAVMGLLFPTFLHYTHSEVHAGSSELALSRFISCIMLVAYAAYLFFQLKSQPSFYTEKTNQNEETSNDDEDPEISKWEAIIWLSIFTAWVSLLSGYLVDAIEGTSVSWKIPISFISVILLPIVGNAAEHAGAIMFAMKDKLDLSLGVAIGSSIQISMFAVPFCVVIGWMMGAQMDLNLQLFETATLLITVIVVAFFLQLEGTSNYFKRLMLILCYLIVAASFFVHEDPHQG.

Residues 31–81 lie on the Cytoplasmic side of the membrane; sequence MGLVNEVELKSLLEQETDSPQTNAASLMEQGSLRERRAKAPRNSVVQSFKI. A helical transmembrane segment spans residues 82 to 102; sequence VILSNKLNLLLPFGPLAILVH. Residues 103 to 109 lie on the Extracellular side of the membrane; it reads YLTDNKG. The chain crosses the membrane as a helical span at residues 110-130; the sequence is WFFLLSLVGITPLAERLGYAT. Residues 131–141 are Cytoplasmic-facing; it reads EQLSCYTGATV. A helical membrane pass occupies residues 142–162; that stretch reads GGLLNATFGNVIELIISIIAL. The cation selection stretch occupies residues 150–185; sequence GNVIELIISIIALKNGMIRVVQLTLLGSILSNILLV. The Extracellular portion of the chain corresponds to 163-178; the sequence is KNGMIRVVQLTLLGSI. Residues 179 to 199 form a helical membrane-spanning segment; it reads LSNILLVLGCAFFCGGLVFPG. Topologically, residues 200 to 209 are cytoplasmic; the sequence is KDQVFDKRNA. Residues 210–230 traverse the membrane as a helical segment; the sequence is VVSSGMLLMAVMGLLFPTFLH. Residues 231 to 243 are Extracellular-facing; sequence YTHSEVHAGSSEL. A helical membrane pass occupies residues 244–264; sequence ALSRFISCIMLVAYAAYLFFQ. Residues 265–295 lie on the Cytoplasmic side of the membrane; the sequence is LKSQPSFYTEKTNQNEETSNDDEDPEISKWE. Residues 296–316 form a helical membrane-spanning segment; it reads AIIWLSIFTAWVSLLSGYLVD. Residues 317 to 334 are Extracellular-facing; that stretch reads AIEGTSVSWKIPISFISV. A helical membrane pass occupies residues 335-355; that stretch reads ILLPIVGNAAEHAGAIMFAMK. The interval 341–376 is cation selection; that stretch reads GNAAEHAGAIMFAMKDKLDLSLGVAIGSSIQISMFA. Topologically, residues 356–363 are cytoplasmic; sequence DKLDLSLG. A helical membrane pass occupies residues 364–384; it reads VAIGSSIQISMFAVPFCVVIG. Residues 385–393 lie on the Extracellular side of the membrane; that stretch reads WMMGAQMDL. Residues 394–414 traverse the membrane as a helical segment; the sequence is NLQLFETATLLITVIVVAFFL. The Cytoplasmic portion of the chain corresponds to 415 to 425; that stretch reads QLEGTSNYFKR. Residues 426 to 446 traverse the membrane as a helical segment; it reads LMLILCYLIVAASFFVHEDPH. Topologically, residues 447 to 448 are extracellular; the sequence is QG.

This sequence belongs to the Ca(2+):cation antiporter (CaCA) (TC 2.A.19) family. Cation/proton exchanger (CAX) subfamily.

It localises to the vacuole membrane. Functionally, vacuolar cation/proton exchanger (CAX). Translocates Ca(2+) and other metal ions into vacuoles using the proton gradient formed by H(+)-ATPase and H(+)-pyrophosphatase. The polypeptide is Putative vacuolar cation/proton exchanger 6 (CAX6) (Arabidopsis thaliana (Mouse-ear cress)).